Consider the following 558-residue polypeptide: Dihydroxy-acid dehydratase (558 aa).

Mg(2+) is bound at residue Asp78. Position 119 (Cys119) interacts with [2Fe-2S] cluster. Mg(2+) contacts are provided by Asp120 and Lys121. Lys121 is subject to N6-carboxylysine. Cys192 contacts [2Fe-2S] cluster. Residue Glu446 coordinates Mg(2+). Residue Ser472 is the Proton acceptor of the active site.

This sequence belongs to the IlvD/Edd family. As to quaternary structure, homodimer. [2Fe-2S] cluster serves as cofactor. Requires Mg(2+) as cofactor.

It catalyses the reaction (2R)-2,3-dihydroxy-3-methylbutanoate = 3-methyl-2-oxobutanoate + H2O. The enzyme catalyses (2R,3R)-2,3-dihydroxy-3-methylpentanoate = (S)-3-methyl-2-oxopentanoate + H2O. The protein operates within amino-acid biosynthesis; L-isoleucine biosynthesis; L-isoleucine from 2-oxobutanoate: step 3/4. It functions in the pathway amino-acid biosynthesis; L-valine biosynthesis; L-valine from pyruvate: step 3/4. Functions in the biosynthesis of branched-chain amino acids. Catalyzes the dehydration of (2R,3R)-2,3-dihydroxy-3-methylpentanoate (2,3-dihydroxy-3-methylvalerate) into 2-oxo-3-methylpentanoate (2-oxo-3-methylvalerate) and of (2R)-2,3-dihydroxy-3-methylbutanoate (2,3-dihydroxyisovalerate) into 2-oxo-3-methylbutanoate (2-oxoisovalerate), the penultimate precursor to L-isoleucine and L-valine, respectively. The chain is Dihydroxy-acid dehydratase from Campylobacter jejuni subsp. jejuni serotype O:23/36 (strain 81-176).